Consider the following 210-residue polypeptide: MSRALLTLVQWLSPAFPTGAFAYSHGLEWAIAEGEVQDAAGVEQWVADILRFGSGRTDAILLAHALKGHDLEALSDLARALAPSAERLRETEEQGAAFAATTAALTGRALPPRPLPVAIGQAAAALGRPVTEVLELTLHAFAANLVSAAVRFVPLGQTEGQAILSSLHPLIEEIARESAEAPIEAIGSAAVRGDLAAMRHETQQVRIFKT.

The protein belongs to the UreF family. UreD, UreF and UreG form a complex that acts as a GTP-hydrolysis-dependent molecular chaperone, activating the urease apoprotein by helping to assemble the nickel containing metallocenter of UreC. The UreE protein probably delivers the nickel.

It is found in the cytoplasm. Functionally, required for maturation of urease via the functional incorporation of the urease nickel metallocenter. The polypeptide is Urease accessory protein UreF (Cereibacter sphaeroides (strain ATCC 17025 / ATH 2.4.3) (Rhodobacter sphaeroides)).